Here is a 192-residue protein sequence, read N- to C-terminus: Ciliary microtubule-associated protein 3 (192 aa).

As to quaternary structure, interacts with proteins involved in ciliary transport, including ARL13B, CETN1, KIF3A, RAB6A, RAB8A, TUBB1 and TUBG1. Interacts with AURKA.

It is found in the cytoplasmic vesicle. Its subcellular location is the golgi apparatus. The protein resides in the trans-Golgi network. It localises to the cytoplasm. Its function is as follows. During primary cilia disassembly, involved in cilia disassembly. Required specifically to control cilia retraction as well as the liberation and duplication of the basal body/centrosome. May act by stimulating AURKA activity at the basal body in a cell cycle-dependent manner. The sequence is that of Ciliary microtubule-associated protein 3 (CIMAP3) from Bos taurus (Bovine).